Here is a 207-residue protein sequence, read N- to C-terminus: Ras-related protein Rab-8B (207 aa).

GTP-binding residues include S17, G18, V19, G20, K21, T22, C23, T35, S39, and T40. T22 lines the Mg(2+) pocket. 2 consecutive short sequence motifs (switch) follow at residues 31–45 (DAFN…GIDF) and 63–80 (DTAG…YYRG). Mg(2+) is bound by residues T40 and D63. GTP is bound at residue G66. The residue at position 72 (T72) is a Phosphothreonine; by LRRK2. Residues N121, K122, D124, A152, and K153 each contribute to the GTP site. A phosphoserine mark is found at S180 and S183. Position 204 is a cysteine methyl ester (C204). A lipid anchor (S-geranylgeranyl cysteine) is attached at C204. A propeptide spans 205–207 (SLL) (removed in mature form).

This sequence belongs to the small GTPase superfamily. Rab family. Associated with actin, delta-catenin and alpha and beta tubulins. Interacts with OTOF. Interacts with PEX5R. Interacts with RAB3IP. Interacts with VIM. Interacts with CDH1. Interacts with MICALL2. Interacts with GDI1, GDI2, CHML and CHM; phosphorylation at Thr-72 disrupts these interactions. Interacts with MICAL1. It depends on Mg(2+) as a cofactor. Phosphorylation of Thr-72 in the switch II region by LRRK2 prevents the association of RAB regulatory proteins, including CHM, CHML and RAB GDP dissociation inhibitors GDI1 and GDI2.

It localises to the cell membrane. The protein localises to the cytoplasmic vesicle. It is found in the phagosome membrane. The protein resides in the endosome membrane. The enzyme catalyses GTP + H2O = GDP + phosphate + H(+). Regulated by guanine nucleotide exchange factors (GEFs) including RAB3IP/RABIN8 which promotes the exchange of bound GDP for free GTP. Regulated by GTPase activating proteins (GAPs) which increase the GTP hydrolysis activity. Inhibited by GDP dissociation inhibitors (GDIs). In terms of biological role, the small GTPases Rab are key regulators of intracellular membrane trafficking, from the formation of transport vesicles to their fusion with membranes. Rabs cycle between an inactive GDP-bound form and an active GTP-bound form that is able to recruit to membranes different sets of downstream effectors directly responsible for vesicle formation, movement, tethering and fusion. RAB8B may be involved in polarized vesicular trafficking and neurotransmitter release. May participate in cell junction dynamics in Sertoli cells. May also participate in the export of a subset of neosynthesized proteins through a Rab8-Rab10-Rab11-dependent endososomal export route. This Mus musculus (Mouse) protein is Ras-related protein Rab-8B.